The chain runs to 247 residues: tRNA pseudouridine synthase A (247 aa).

Asp57 functions as the Nucleophile in the catalytic mechanism. Tyr115 provides a ligand contact to substrate.

It belongs to the tRNA pseudouridine synthase TruA family. Homodimer.

It carries out the reaction uridine(38/39/40) in tRNA = pseudouridine(38/39/40) in tRNA. Its function is as follows. Formation of pseudouridine at positions 38, 39 and 40 in the anticodon stem and loop of transfer RNAs. The sequence is that of tRNA pseudouridine synthase A from Chlorobaculum tepidum (strain ATCC 49652 / DSM 12025 / NBRC 103806 / TLS) (Chlorobium tepidum).